We begin with the raw amino-acid sequence, 634 residues long: MDLWQLLLTLAVAGSSDAFSGSEATPAFLVRASQSLQILYPVLETNSSGNPKFTKCRSPELETFSCHWTDGANHSLQSPGSVQMFYIRRDIQEWKECPDYVSAGENSCYFNSSYTSVWTPYCIKLTSNGGIVDHKCFSVEDIVQPDPPVGLNWTLLNISLTEIHADILVKWEPPPNTDVKMGWIILEYELHYKELNETQWKMMDPLMVTSVPMYSLRLDKEYEVRVRTRQRNTEKYGKFSEVLLITFPQMNPSACEEDFQFPWFLIIMFGILGLAVTLFLLIFSKQQRIKMLILPPVPVPKIKGIDPDLLKEGKLEEVNTILAIHDNYKHEFYNDDSWVEFIELDIDDPDEKTEGSDTDRLLSNDHEKSLNIFGAKDDDSGRTSCYEPDILEADFHVSDMCDGTSEVAQPQRLKGEADISCLDQKNQNNSPSNDAAPANQQPSVIHVEENKPRPLLIGGTESTHQAVHHQLSNPSSLANIDFYAQVSDITPAGNVVLSPGQKNKTGNPQCDTHPEVVTSCQANFIVDNAYFCEVDAKKYIALAPHVEAESHVEPSFNQEDIYITTESLTTTAGRSGTAEHVPSSEIPVPDYTSIHIVQSPQGLVLNATALPLPDKEFLSSCGYVSTDQLNKIMP.

A signal peptide spans 1-18; it reads MDLWQLLLTLAVAGSSDA. The Extracellular segment spans residues 19–260; sequence FSGSEATPAF…NPSACEEDFQ (242 aa). Asn-46 carries an N-linked (GlcNAc...) asparagine glycan. Residues Cys-56 and Cys-66 are joined by a disulfide bond. A glycan (N-linked (GlcNAc...) asparagine) is linked at Asn-73. Cysteines 97 and 108 form a disulfide. Residue Asn-111 is glycosylated (N-linked (GlcNAc...) asparagine). A disulfide bridge links Cys-122 with Cys-136. The 104-residue stretch at 147 to 250 folds into the Fibronectin type-III domain; it reads PPVGLNWTLL…EVLLITFPQM (104 aa). Asn-152, Asn-157, and Asn-196 each carry an N-linked (GlcNAc...) asparagine glycan. The WSXWS motif motif lies at 236–240; that stretch reads YGKFS. Residues 261–284 traverse the membrane as a helical segment; it reads FPWFLIIMFGILGLAVTLFLLIFS. At 285-634 the chain is on the cytoplasmic side; that stretch reads KQQRIKMLIL…STDQLNKIMP (350 aa). The segment at 290–375 is required for JAK2 binding; it reads KMLILPPVPV…HEKSLNIFGA (86 aa). The short motif at 293 to 301 is the Box 1 motif element; sequence ILPPVPVPK. The short motif at 336-345 is the UbE motif element; the sequence is DSWVEFIELD. Residue Ser-337 is modified to Phosphoserine. Tyr-483 and Tyr-591 each carry phosphotyrosine.

The protein belongs to the type I cytokine receptor family. Type 1 subfamily. On growth hormone (GH) binding, forms homodimers and binds JAK2 via a box 1-containing domain. The soluble form (GHBP) is produced by phorbol ester-promoted proteolytic cleavage at the cell surface (shedding) by ADAM17/TACE. Shedding is inhibited by growth hormone (GH) binding to the receptor probably due to a conformational change in GHR rendering the receptor inaccessible to ADAM17. In terms of processing, on GH binding, phosphorylated on tyrosine residues in the cytoplasmic domain by JAK2. Post-translationally, ubiquitinated by the ECS(SOCS2) complex following ligand-binding and phosphorylation by JAK2, leading to its degradation by the proteasome. Regulation by the ECS(SOCS2) complex acts as a negative feedback loop of growth hormone receptor signaling. Ubiquitination is not sufficient for GHR internalization.

Its subcellular location is the cell membrane. It is found in the secreted. Receptor for pituitary gland growth hormone (GH1) involved in regulating postnatal body growth. On ligand binding, couples to the JAK2/STAT5 pathway. In terms of biological role, the soluble form (GHBP) acts as a reservoir of growth hormone in plasma and may be a modulator/inhibitor of GH signaling. This Bos indicus (Zebu) protein is Growth hormone receptor (GHR).